Reading from the N-terminus, the 72-residue chain is Translation initiation factor IF-1 (72 aa).

One can recognise an S1-like domain in the interval 1–72 (MAKDDVIQMQ…SRARIVFRAK (72 aa)).

It belongs to the IF-1 family. In terms of assembly, component of the 30S ribosomal translation pre-initiation complex which assembles on the 30S ribosome in the order IF-2 and IF-3, IF-1 and N-formylmethionyl-tRNA(fMet); mRNA recruitment can occur at any time during PIC assembly.

It localises to the cytoplasm. In terms of biological role, one of the essential components for the initiation of protein synthesis. Stabilizes the binding of IF-2 and IF-3 on the 30S subunit to which N-formylmethionyl-tRNA(fMet) subsequently binds. Helps modulate mRNA selection, yielding the 30S pre-initiation complex (PIC). Upon addition of the 50S ribosomal subunit IF-1, IF-2 and IF-3 are released leaving the mature 70S translation initiation complex. The polypeptide is Translation initiation factor IF-1 (Burkholderia mallei (strain NCTC 10247)).